The primary structure comprises 284 residues: 2-dehydro-3-deoxyphosphooctonate aldolase (284 aa).

Belongs to the KdsA family.

It is found in the cytoplasm. It carries out the reaction D-arabinose 5-phosphate + phosphoenolpyruvate + H2O = 3-deoxy-alpha-D-manno-2-octulosonate-8-phosphate + phosphate. The protein operates within carbohydrate biosynthesis; 3-deoxy-D-manno-octulosonate biosynthesis; 3-deoxy-D-manno-octulosonate from D-ribulose 5-phosphate: step 2/3. It participates in bacterial outer membrane biogenesis; lipopolysaccharide biosynthesis. The polypeptide is 2-dehydro-3-deoxyphosphooctonate aldolase (Paraburkholderia xenovorans (strain LB400)).